The primary structure comprises 321 residues: Lipoyl synthase (321 aa).

[4Fe-4S] cluster is bound by residues C68, C73, C79, C94, C98, C101, and S308. The 218-residue stretch at 80 to 297 (FNHGTATFMI…KALADELGFT (218 aa)) folds into the Radical SAM core domain.

It belongs to the radical SAM superfamily. Lipoyl synthase family. Requires [4Fe-4S] cluster as cofactor.

It is found in the cytoplasm. It carries out the reaction [[Fe-S] cluster scaffold protein carrying a second [4Fe-4S](2+) cluster] + N(6)-octanoyl-L-lysyl-[protein] + 2 oxidized [2Fe-2S]-[ferredoxin] + 2 S-adenosyl-L-methionine + 4 H(+) = [[Fe-S] cluster scaffold protein] + N(6)-[(R)-dihydrolipoyl]-L-lysyl-[protein] + 4 Fe(3+) + 2 hydrogen sulfide + 2 5'-deoxyadenosine + 2 L-methionine + 2 reduced [2Fe-2S]-[ferredoxin]. It functions in the pathway protein modification; protein lipoylation via endogenous pathway; protein N(6)-(lipoyl)lysine from octanoyl-[acyl-carrier-protein]: step 2/2. Catalyzes the radical-mediated insertion of two sulfur atoms into the C-6 and C-8 positions of the octanoyl moiety bound to the lipoyl domains of lipoate-dependent enzymes, thereby converting the octanoylated domains into lipoylated derivatives. This chain is Lipoyl synthase, found in Shewanella frigidimarina (strain NCIMB 400).